Here is a 208-residue protein sequence, read N- to C-terminus: Uracil phosphoribosyltransferase (208 aa).

Residues Arg-78, Arg-103, and 130–138 contribute to the 5-phospho-alpha-D-ribose 1-diphosphate site; that span reads DPMLATGGT. Residues Ile-193 and 198–200 contribute to the uracil site; that span reads GDA. Asp-199 is a 5-phospho-alpha-D-ribose 1-diphosphate binding site.

Belongs to the UPRTase family. Mg(2+) is required as a cofactor.

It carries out the reaction UMP + diphosphate = 5-phospho-alpha-D-ribose 1-diphosphate + uracil. Its pathway is pyrimidine metabolism; UMP biosynthesis via salvage pathway; UMP from uracil: step 1/1. Its activity is regulated as follows. Allosterically activated by GTP. Functionally, catalyzes the conversion of uracil and 5-phospho-alpha-D-ribose 1-diphosphate (PRPP) to UMP and diphosphate. The sequence is that of Uracil phosphoribosyltransferase from Oleidesulfovibrio alaskensis (strain ATCC BAA-1058 / DSM 17464 / G20) (Desulfovibrio alaskensis).